Here is a 199-residue protein sequence, read N- to C-terminus: Chaperone protein TorD (199 aa).

Belongs to the TorD/DmsD family. TorD subfamily.

It localises to the cytoplasm. In terms of biological role, involved in the biogenesis of TorA. Acts on TorA before the insertion of the molybdenum cofactor and, as a result, probably favors a conformation of the apoenzyme that is competent for acquiring the cofactor. This is Chaperone protein TorD from Escherichia coli O139:H28 (strain E24377A / ETEC).